The chain runs to 288 residues: Beta-lactamase PSE-4 (288 aa).

The first 17 residues, 1–17, serve as a signal peptide directing secretion; that stretch reads MKFLLAFSLLIPSVVFA. Serine 65 serves as the catalytic Acyl-ester intermediate. A disulfide bond links cysteine 72 and cysteine 118. 229-231 provides a ligand contact to substrate; that stretch reads RSG.

This sequence belongs to the class-A beta-lactamase family.

The catalysed reaction is a beta-lactam + H2O = a substituted beta-amino acid. Functionally, hydrolyzes both carbenicillin and oxacillin. The sequence is that of Beta-lactamase PSE-4 (pse4) from Pseudomonas aeruginosa.